Reading from the N-terminus, the 274-residue chain is Dermonecrotic toxin SdSicTox-betaIIB1bxii (274 aa).

The active site involves His5. Mg(2+) is bound by residues Glu25 and Asp27. His41 (nucleophile) is an active-site residue. 2 cysteine pairs are disulfide-bonded: Cys45/Cys51 and Cys47/Cys190. Asp85 provides a ligand contact to Mg(2+).

It belongs to the arthropod phospholipase D family. Class II subfamily. It depends on Mg(2+) as a cofactor. Expressed by the venom gland.

The protein resides in the secreted. The enzyme catalyses an N-(acyl)-sphingosylphosphocholine = an N-(acyl)-sphingosyl-1,3-cyclic phosphate + choline. It catalyses the reaction an N-(acyl)-sphingosylphosphoethanolamine = an N-(acyl)-sphingosyl-1,3-cyclic phosphate + ethanolamine. The catalysed reaction is a 1-acyl-sn-glycero-3-phosphocholine = a 1-acyl-sn-glycero-2,3-cyclic phosphate + choline. It carries out the reaction a 1-acyl-sn-glycero-3-phosphoethanolamine = a 1-acyl-sn-glycero-2,3-cyclic phosphate + ethanolamine. In terms of biological role, dermonecrotic toxins cleave the phosphodiester linkage between the phosphate and headgroup of certain phospholipids (sphingolipid and lysolipid substrates), forming an alcohol (often choline) and a cyclic phosphate. This toxin acts on sphingomyelin (SM). It may also act on ceramide phosphoethanolamine (CPE), lysophosphatidylcholine (LPC) and lysophosphatidylethanolamine (LPE), but not on lysophosphatidylserine (LPS), and lysophosphatidylglycerol (LPG). It acts by transphosphatidylation, releasing exclusively cyclic phosphate products as second products. Induces dermonecrosis, hemolysis, increased vascular permeability, edema, inflammatory response, and platelet aggregation. The sequence is that of Dermonecrotic toxin SdSicTox-betaIIB1bxii from Sicarius cf. damarensis (strain GJB-2008) (Six-eyed sand spider).